The chain runs to 278 residues: Pantothenate synthetase (278 aa).

30–37 provides a ligand contact to ATP; it reads MGFLHEGH. H37 functions as the Proton donor in the catalytic mechanism. Residue Q61 participates in (R)-pantoate binding. Q61 is a beta-alanine binding site. Residue 147–150 participates in ATP binding; it reads GQKD. Q153 contacts (R)-pantoate. ATP is bound by residues V176 and 184–187; that span reads LSSR.

The protein belongs to the pantothenate synthetase family. As to quaternary structure, homodimer.

It localises to the cytoplasm. It catalyses the reaction (R)-pantoate + beta-alanine + ATP = (R)-pantothenate + AMP + diphosphate + H(+). It participates in cofactor biosynthesis; (R)-pantothenate biosynthesis; (R)-pantothenate from (R)-pantoate and beta-alanine: step 1/1. In terms of biological role, catalyzes the condensation of pantoate with beta-alanine in an ATP-dependent reaction via a pantoyl-adenylate intermediate. In Thermosipho africanus (strain TCF52B), this protein is Pantothenate synthetase.